The primary structure comprises 155 residues: Small ribosomal subunit protein bS6 (155 aa).

Positions 94-155 (EKHEEGPSAM…RPRRPREDRV (62 aa)) are disordered.

The protein belongs to the bacterial ribosomal protein bS6 family.

Binds together with bS18 to 16S ribosomal RNA. This is Small ribosomal subunit protein bS6 from Rhizobium johnstonii (strain DSM 114642 / LMG 32736 / 3841) (Rhizobium leguminosarum bv. viciae).